Consider the following 269-residue polypeptide: UPF0354 protein YtpQ (269 aa).

The protein belongs to the UPF0354 family.

This Bacillus subtilis (strain 168) protein is UPF0354 protein YtpQ (ytpQ).